A 435-amino-acid chain; its full sequence is Endosome-associated-trafficking regulator 1 (435 aa).

2 positions are modified to phosphoserine: Ser-18 and Ser-147. 2 disordered regions span residues 136 to 185 (ASRH…TGWS) and 225 to 251 (ESLP…PSAD). Over residues 173–182 (LLDEEEDEDT) the composition is skewed to acidic residues. The required for interaction with PTPN13 stretch occupies residues 173 to 198 (LLDEEEDEDTGWSGAYLPSAIEQTHP). Residues 240 to 250 (SPASPAGSPSA) are compositionally biased toward low complexity. Residues Ser-243 and Ser-247 each carry the phosphoserine modification. A coiled-coil region spans residues 261 to 371 (DRHLRTLQIS…FQRENEALRC (111 aa)).

Belongs to the ENTR1 family. Found in a complex with ENTR1, PTPN13 and GIT1. Interacts with PTPN13 (via the FERM domain). Interacts (via N-terminus) with GIT1 (via N- and C-terminus); this interaction is direct. Interacts with NOD2. Interacts (via N-terminus) with IFT88. Interacts with VPS35. In terms of processing, phosphorylated. Expressed in the colon (at protein level).

The protein resides in the cytoplasm. It localises to the early endosome. It is found in the endosome. Its subcellular location is the recycling endosome. The protein localises to the midbody. The protein resides in the cytoskeleton. It localises to the microtubule organizing center. It is found in the centrosome. Its subcellular location is the cilium basal body. Endosome-associated protein that plays a role in membrane receptor sorting, cytokinesis and ciliogenesis. Involved in the endosome-to-plasma membrane trafficking and recycling of SNX27-retromer-dependent cargo proteins, such as GLUT1. Involved in the regulation of cytokinesis; the function may involve PTPN13 and GIT1. Plays a role in the formation of cilia. Involved in cargo protein localization, such as PKD2, at primary cilia. Involved in the presentation of the tumor necrosis factor (TNF) receptor TNFRSF1A on the cell surface, and hence in the modulation of the TNF-induced apoptosis. This is Endosome-associated-trafficking regulator 1 from Homo sapiens (Human).